The chain runs to 181 residues: Ribosome maturation factor RimM (181 aa).

One can recognise a PRC barrel domain in the interval 100–177; that stretch reads EEGFYWMQLI…QIQVDWQLED (78 aa).

This sequence belongs to the RimM family. As to quaternary structure, binds ribosomal protein uS19.

It localises to the cytoplasm. In terms of biological role, an accessory protein needed during the final step in the assembly of 30S ribosomal subunit, possibly for assembly of the head region. Essential for efficient processing of 16S rRNA. May be needed both before and after RbfA during the maturation of 16S rRNA. It has affinity for free ribosomal 30S subunits but not for 70S ribosomes. This chain is Ribosome maturation factor RimM, found in Hydrogenovibrio crunogenus (strain DSM 25203 / XCL-2) (Thiomicrospira crunogena).